Here is a 142-residue protein sequence, read N- to C-terminus: Large ribosomal subunit protein uL11 (142 aa).

The protein belongs to the universal ribosomal protein uL11 family. In terms of assembly, part of the ribosomal stalk of the 50S ribosomal subunit. Interacts with L10 and the large rRNA to form the base of the stalk. L10 forms an elongated spine to which L12 dimers bind in a sequential fashion forming a multimeric L10(L12)X complex. One or more lysine residues are methylated.

Forms part of the ribosomal stalk which helps the ribosome interact with GTP-bound translation factors. The polypeptide is Large ribosomal subunit protein uL11 (Haemophilus ducreyi (strain 35000HP / ATCC 700724)).